Reading from the N-terminus, the 343-residue chain is Fructose-bisphosphate aldolase (343 aa).

Ser-53 contacts D-glyceraldehyde 3-phosphate. Asp-95 functions as the Proton donor in the catalytic mechanism. Zn(2+) contacts are provided by His-96, Asp-131, Glu-161, and His-212. Gly-213 contacts dihydroxyacetone phosphate. A Zn(2+)-binding site is contributed by His-252. Dihydroxyacetone phosphate contacts are provided by residues 253–255 and 274–277; these read GGS and NIDT.

The protein belongs to the class II fructose-bisphosphate aldolase family. It depends on Zn(2+) as a cofactor.

The catalysed reaction is beta-D-fructose 1,6-bisphosphate = D-glyceraldehyde 3-phosphate + dihydroxyacetone phosphate. It functions in the pathway carbohydrate degradation; glycolysis; D-glyceraldehyde 3-phosphate and glycerone phosphate from D-glucose: step 4/4. In terms of biological role, catalyzes the aldol condensation of dihydroxyacetone phosphate (DHAP or glycerone-phosphate) with glyceraldehyde 3-phosphate (G3P) to form fructose 1,6-bisphosphate (FBP) in gluconeogenesis and the reverse reaction in glycolysis. The polypeptide is Fructose-bisphosphate aldolase (fba) (Streptomyces coelicolor (strain ATCC BAA-471 / A3(2) / M145)).